Consider the following 280-residue polypeptide: Phosphonates import ATP-binding protein PhnC 1 (280 aa).

In terms of domain architecture, ABC transporter spans phenylalanine 3–serine 247. Glycine 36–threonine 43 contributes to the ATP binding site.

This sequence belongs to the ABC transporter superfamily. Phosphonates importer (TC 3.A.1.9.1) family. The complex is composed of two ATP-binding proteins (PhnC), two transmembrane proteins (PhnE) and a solute-binding protein (PhnD).

It localises to the cell inner membrane. It carries out the reaction phosphonate(out) + ATP + H2O = phosphonate(in) + ADP + phosphate + H(+). In terms of biological role, part of the ABC transporter complex PhnCDE involved in phosphonates import. Responsible for energy coupling to the transport system. In Cupriavidus necator (strain ATCC 17699 / DSM 428 / KCTC 22496 / NCIMB 10442 / H16 / Stanier 337) (Ralstonia eutropha), this protein is Phosphonates import ATP-binding protein PhnC 1.